The sequence spans 420 residues: Glycogen synthase kinase-3 beta (420 aa).

The span at 1–22 shows a compositional bias: polar residues; it reads MSGRPRTTSFAESCKPVQQPSA. The tract at residues 1-53 is disordered; it reads MSGRPRTTSFAESCKPVQQPSAFGSMKVSRDKDGSKVTTVVATPGQGPDRPQE. Position 9 is a phosphoserine; by PKB/AKT1, RPS6KA3 and SGK3 (serine 9). A lipid anchor (S-palmitoyl cysteine) is attached at cysteine 14. A Protein kinase domain is found at 56 to 340; sequence YTDTKVIGNG…PLEACAHSFF (285 aa). ATP-binding positions include 62 to 70 and lysine 85; that span reads IGNGSFGVV. Catalysis depends on aspartate 181, which acts as the Proton acceptor. Tyrosine 216 carries the phosphotyrosine modification. A compositionally biased stretch (low complexity) spans 386-401; the sequence is AAASTPTNATAASDAN. The segment at 386–420 is disordered; sequence AAASTPTNATAASDANTGDRGQTNNAASASASNST. At serine 389 the chain carries Phosphoserine. Residues threonine 390 and threonine 402 each carry the phosphothreonine modification. Positions 409–420 are enriched in low complexity; it reads NNAASASASNST.

The protein belongs to the protein kinase superfamily. CMGC Ser/Thr protein kinase family. GSK-3 subfamily. As to quaternary structure, monomer. Interacts with ARRB2, DISC1 and ZBED3. Interacts with CABYR, MMP2, MUC1, NIN and PRUNE1. Interacts with AXIN1; the interaction mediates hyperphosphorylation of CTNNB1 leading to its ubiquitination and destruction. Interacts with and phosphorylates SNAI1. Interacts with DNM1L (via a C-terminal domain). Found in a complex composed of MACF1, APC, AXIN1, CTNNB1 and GSK3B. Interacts with SGK3. Interacts with DAB2IP (via C2 domain); the interaction stimulates GSK3B kinase activation. Interacts (via C2 domain) with PPP2CA. Interacts with the CLOCK-BMAL1 heterodimer. Interacts with the BMAL1. Interacts with CTNND2. Interacts with NCYM. The complex composed, at least, of APC, CTNNB1 and GSK3B interacts with JPT1; the interaction requires the inactive form of GSK3B (phosphorylated at 'Ser-9'). Forms a complex composed of PRKAR2A or PRKAR2B, GSK3B and GSKIP through GSKIP interaction; facilitates PKA-induced phosphorylation and regulates GSK3B activity. Interacts with GSKIP. Interacts with GID8. Interacts with PIWIL2. Interacts with LMBR1L. Interacts with DDX3X. Interacts with BIRC2. Interacts with TNFRSF10B; TNFRSF10B stimulation inhibits GSK3B kinase activity. Interacts with RICTOR; the interaction results in phosphorylation of RICTOR at 'Thr-1695' by GSK3B which facilitates FBXW7-mediated ubiquitination and subsequent degradation of RICTOR. Found in a complex with SLC39A6, SLC39A10 and with GSK3B that controls NCAM1 phosphorylation. Interacts with PKP3 (via ARM repeats); the interaction may be involved in PKP3 protein degradation. Phosphorylated by AKT1 and ILK1. Upon insulin-mediated signaling, the activated PKB/AKT1 protein kinase phosphorylates and deactivates GSK3B, resulting in the dephosphorylation and activation of GYS1. Activated by phosphorylation at Tyr-216. Inactivated by phosphorylation at Ser-9. Phosphorylated in a circadian manner in the hippocampus. Post-translationally, mono-ADP-ribosylation by PARP10 negatively regulates kinase activity. In terms of processing, palmitoylated. Palmitoylation by ZDHHC4 prevents AKT1-mediated phosphorylation. As to expression, expressed in testis, thymus, prostate and ovary and weakly expressed in lung, brain and kidney. Colocalizes with EIF2AK2/PKR and TAU in the Alzheimer disease (AD) brain.

The protein resides in the cytoplasm. Its subcellular location is the nucleus. It localises to the cell membrane. It catalyses the reaction L-seryl-[tau protein] + ATP = O-phospho-L-seryl-[tau protein] + ADP + H(+). It carries out the reaction L-threonyl-[tau protein] + ATP = O-phospho-L-threonyl-[tau protein] + ADP + H(+). The catalysed reaction is L-seryl-[protein] + ATP = O-phospho-L-seryl-[protein] + ADP + H(+). The enzyme catalyses L-threonyl-[protein] + ATP = O-phospho-L-threonyl-[protein] + ADP + H(+). With respect to regulation, activated by phosphorylation at Tyr-216. In response to insulin, inhibited by phosphorylation at Ser-9 by PKB/AKT1 and RPS6KA3; phosphorylation at this site causes a conformational change, preventing access of substrates to the active site. Inhibited by IL22 treatment which also triggers phosphorylation at Ser-9, promoting inactivation. Inhibited by lithium. Its function is as follows. Constitutively active protein kinase that acts as a negative regulator in the hormonal control of glucose homeostasis, Wnt signaling and regulation of transcription factors and microtubules, by phosphorylating and inactivating glycogen synthase (GYS1 or GYS2), EIF2B, CTNNB1/beta-catenin, APC, AXIN1, DPYSL2/CRMP2, JUN, NFATC1/NFATC, MAPT/TAU and MACF1. Requires primed phosphorylation of the majority of its substrates. In skeletal muscle, contributes to insulin regulation of glycogen synthesis by phosphorylating and inhibiting GYS1 activity and hence glycogen synthesis. May also mediate the development of insulin resistance by regulating activation of transcription factors. Regulates protein synthesis by controlling the activity of initiation factor 2B (EIF2BE/EIF2B5) in the same manner as glycogen synthase. In Wnt signaling, GSK3B forms a multimeric complex with APC, AXIN1 and CTNNB1/beta-catenin and phosphorylates the N-terminus of CTNNB1 leading to its degradation mediated by ubiquitin/proteasomes. Phosphorylates JUN at sites proximal to its DNA-binding domain, thereby reducing its affinity for DNA. Phosphorylates NFATC1/NFATC on conserved serine residues promoting NFATC1/NFATC nuclear export, shutting off NFATC1/NFATC gene regulation, and thereby opposing the action of calcineurin. Phosphorylates MAPT/TAU on 'Thr-548', decreasing significantly MAPT/TAU ability to bind and stabilize microtubules. MAPT/TAU is the principal component of neurofibrillary tangles in Alzheimer disease. Plays an important role in ERBB2-dependent stabilization of microtubules at the cell cortex. Phosphorylates MACF1, inhibiting its binding to microtubules which is critical for its role in bulge stem cell migration and skin wound repair. Probably regulates NF-kappa-B (NFKB1) at the transcriptional level and is required for the NF-kappa-B-mediated anti-apoptotic response to TNF-alpha (TNF/TNFA). Negatively regulates replication in pancreatic beta-cells, resulting in apoptosis, loss of beta-cells and diabetes. Through phosphorylation of the anti-apoptotic protein MCL1, may control cell apoptosis in response to growth factors deprivation. Phosphorylates MUC1 in breast cancer cells, decreasing the interaction of MUC1 with CTNNB1/beta-catenin. Is necessary for the establishment of neuronal polarity and axon outgrowth. Phosphorylates MARK2, leading to inhibition of its activity. Phosphorylates SIK1 at 'Thr-182', leading to sustainment of its activity. Phosphorylates ZC3HAV1 which enhances its antiviral activity. Phosphorylates SNAI1, leading to its ubiquitination and proteasomal degradation. Phosphorylates SFPQ at 'Thr-687' upon T-cell activation. Phosphorylates NR1D1 st 'Ser-55' and 'Ser-59' and stabilizes it by protecting it from proteasomal degradation. Regulates the circadian clock via phosphorylation of the major clock components including BMAL1, CLOCK and PER2. Phosphorylates FBXL2 at 'Thr-404' and primes it for ubiquitination by the SCF(FBXO3) complex and proteasomal degradation. Phosphorylates CLOCK AT 'Ser-427' and targets it for proteasomal degradation. Phosphorylates BMAL1 at 'Ser-17' and 'Ser-21' and primes it for ubiquitination and proteasomal degradation. Phosphorylates OGT at 'Ser-3' or 'Ser-4' which positively regulates its activity. Phosphorylates MYCN in neuroblastoma cells which may promote its degradation. Regulates the circadian rhythmicity of hippocampal long-term potentiation and BMAL1 and PER2 expression. Acts as a regulator of autophagy by mediating phosphorylation of KAT5/TIP60 under starvation conditions, activating KAT5/TIP60 acetyltransferase activity and promoting acetylation of key autophagy regulators, such as ULK1 and RUBCNL/Pacer. Negatively regulates extrinsic apoptotic signaling pathway via death domain receptors. Promotes the formation of an anti-apoptotic complex, made of DDX3X, BRIC2 and GSK3B, at death receptors, including TNFRSF10B. The anti-apoptotic function is most effective with weak apoptotic signals and can be overcome by stronger stimulation. Phosphorylates E2F1, promoting the interaction between E2F1 and USP11, stabilizing E2F1 and promoting its activity. Phosphorylates mTORC2 complex component RICTOR at 'Ser-1235' in response to endoplasmic stress, inhibiting mTORC2. Phosphorylates mTORC2 complex component RICTOR at 'Thr-1695' which facilitates FBXW7-mediated ubiquitination and subsequent degradation of RICTOR. Phosphorylates FXR1, promoting FXR1 ubiquitination by the SCF(FBXO4) complex and FXR1 degradation by the proteasome. Phosphorylates interleukin-22 receptor subunit IL22RA1, preventing its proteasomal degradation. The chain is Glycogen synthase kinase-3 beta from Homo sapiens (Human).